The chain runs to 570 residues: Methionine--tRNA ligase (570 aa).

A 'HIGH' region motif is present at residues 11–21; sequence PYVQTVPHLGN. Positions 143, 146, 156, and 159 each coordinate Zn(2+). The 'KMSKS' region signature appears at 333–337; the sequence is KFSKS. An ATP-binding site is contributed by K336.

It belongs to the class-I aminoacyl-tRNA synthetase family. MetG type 1 subfamily. Zn(2+) is required as a cofactor.

It localises to the cytoplasm. The catalysed reaction is tRNA(Met) + L-methionine + ATP = L-methionyl-tRNA(Met) + AMP + diphosphate. Is required not only for elongation of protein synthesis but also for the initiation of all mRNA translation through initiator tRNA(fMet) aminoacylation. This chain is Methionine--tRNA ligase, found in Pyrobaculum calidifontis (strain DSM 21063 / JCM 11548 / VA1).